The chain runs to 161 residues: Putative pre-16S rRNA nuclease (161 aa).

The protein belongs to the YqgF nuclease family.

It localises to the cytoplasm. Could be a nuclease involved in processing of the 5'-end of pre-16S rRNA. The protein is Putative pre-16S rRNA nuclease of Bradyrhizobium diazoefficiens (strain JCM 10833 / BCRC 13528 / IAM 13628 / NBRC 14792 / USDA 110).